A 177-amino-acid chain; its full sequence is Endoribonuclease YbeY (177 aa).

Zn(2+)-binding residues include H118, H122, and H128.

This sequence belongs to the endoribonuclease YbeY family. Zn(2+) serves as cofactor.

The protein localises to the cytoplasm. Its function is as follows. Single strand-specific metallo-endoribonuclease involved in late-stage 70S ribosome quality control and in maturation of the 3' terminus of the 16S rRNA. The polypeptide is Endoribonuclease YbeY (Mycobacterium sp. (strain JLS)).